Reading from the N-terminus, the 450-residue chain is Enolase (450 aa).

Gln173 lines the (2R)-2-phosphoglycerate pocket. The active-site Proton donor is Glu215. Mg(2+) is bound by residues Asp254, Glu308, and Asp335. The (2R)-2-phosphoglycerate site is built by Lys360, Arg389, Ser390, and Lys411. The active-site Proton acceptor is the Lys360.

The protein belongs to the enolase family. Mg(2+) is required as a cofactor.

It is found in the cytoplasm. Its subcellular location is the secreted. The protein localises to the cell surface. It catalyses the reaction (2R)-2-phosphoglycerate = phosphoenolpyruvate + H2O. It functions in the pathway carbohydrate degradation; glycolysis; pyruvate from D-glyceraldehyde 3-phosphate: step 4/5. Its function is as follows. Catalyzes the reversible conversion of 2-phosphoglycerate (2-PG) into phosphoenolpyruvate (PEP). It is essential for the degradation of carbohydrates via glycolysis. This is Enolase from Malacoplasma penetrans (strain HF-2) (Mycoplasma penetrans).